An 86-amino-acid chain; its full sequence is MGKTKVVGIAGRYGTRYGSTLRKKIRDILEKRYSPHTCPFCGHKGKVYRLSTGVWACKKCGAKWAGGAYMPKTESAKLFSDIIIRE.

Residues 38–60 form a C4-type zinc finger; it reads CPFCGHKGKVYRLSTGVWACKKC.

The protein belongs to the eukaryotic ribosomal protein eL43 family. Requires Zn(2+) as cofactor.

This is Large ribosomal subunit protein eL43 from Desulfurococcus amylolyticus (strain DSM 18924 / JCM 16383 / VKM B-2413 / 1221n) (Desulfurococcus kamchatkensis).